A 292-amino-acid polypeptide reads, in one-letter code: ABC transporter ATP-binding protein YtrB (292 aa).

One can recognise an ABC transporter domain in the interval 2–227 (IELRQLSKAI…YIKIQMAFDT (226 aa)). Residue 34–41 (GRNGSGKT) coordinates ATP.

This sequence belongs to the ABC transporter superfamily. As to quaternary structure, the complex is composed of 2 ATP-binding proteins (YtrB and YtrE), 2 transmembrane proteins (YtrC and YtrD) and a solute-binding protein (YtrF).

The protein resides in the cell membrane. Its function is as follows. Part of the ABC transporter complex YtrBCDEF that plays a role in acetoin utilization during stationary phase and sporulation. This is ABC transporter ATP-binding protein YtrB (ytrB) from Bacillus subtilis (strain 168).